A 503-amino-acid chain; its full sequence is Maturase K (503 aa).

This sequence belongs to the intron maturase 2 family. MatK subfamily.

The protein resides in the plastid. Its subcellular location is the chloroplast. Its function is as follows. Usually encoded in the trnK tRNA gene intron. Probably assists in splicing its own and other chloroplast group II introns. The polypeptide is Maturase K (Actinodium cunninghamii (Albany daisy)).